The chain runs to 1651 residues: Vitellogenin-6 (1651 aa).

The first 15 residues, 1 to 15 (MKFFIALALLGAALA), serve as a signal peptide directing secretion. The 683-residue stretch at 34–716 (FRAGREYRYL…TTESVLPTEM (683 aa)) folds into the Vitellogenin domain. N-linked (GlcNAc...) asparagine glycans are attached at residues N252 and N1288. Positions 1340–1515 (ANCVVKSTKI…SYLYKDSKCN (176 aa)) constitute a VWFD domain. Intrachain disulfides connect C1342/C1479 and C1364/C1514. A disordered region spans residues 1527 to 1556 (FQRIEKNQEEEKDQEMNYEESRREQDDEPT).

Synthesized in Caenorhabditis only by 32 cells building the intestine of adult hermaphroditic individuals; they are cotranslationally secreted into the body cavity and subsequently taken up by the gonad.

It localises to the secreted. Functionally, precursor of the egg-yolk proteins that are sources of nutrients during embryonic development. May play a role in cholesterol uptake. May be involved in thermotolerance. In Caenorhabditis elegans, this protein is Vitellogenin-6 (vit-6).